We begin with the raw amino-acid sequence, 140 residues long: Anti-sigma F factor (140 aa).

This sequence belongs to the anti-sigma-factor family.

The enzyme catalyses L-seryl-[protein] + ATP = O-phospho-L-seryl-[protein] + ADP + H(+). It carries out the reaction L-threonyl-[protein] + ATP = O-phospho-L-threonyl-[protein] + ADP + H(+). Binds to sigma F and blocks its ability to form an RNA polymerase holoenzyme (E-sigma F). Phosphorylates SpoIIAA on a serine residue. This phosphorylation may enable SpoIIAA to act as an anti-anti-sigma factor that counteracts SpoIIAB and thus releases sigma F from inhibition. This is Anti-sigma F factor from Clostridium perfringens (strain SM101 / Type A).